A 129-amino-acid polypeptide reads, in one-letter code: Phosphoribosyl-AMP cyclohydrolase (129 aa).

A Mg(2+)-binding site is contributed by Asp-94. A Zn(2+)-binding site is contributed by Cys-95. Asp-96 and Asp-98 together coordinate Mg(2+). Zn(2+)-binding residues include Cys-111 and Cys-118.

This sequence belongs to the PRA-CH family. As to quaternary structure, homodimer. Mg(2+) is required as a cofactor. The cofactor is Zn(2+).

Its subcellular location is the cytoplasm. It carries out the reaction 1-(5-phospho-beta-D-ribosyl)-5'-AMP + H2O = 1-(5-phospho-beta-D-ribosyl)-5-[(5-phospho-beta-D-ribosylamino)methylideneamino]imidazole-4-carboxamide. The protein operates within amino-acid biosynthesis; L-histidine biosynthesis; L-histidine from 5-phospho-alpha-D-ribose 1-diphosphate: step 3/9. In terms of biological role, catalyzes the hydrolysis of the adenine ring of phosphoribosyl-AMP. The polypeptide is Phosphoribosyl-AMP cyclohydrolase (Corynebacterium efficiens (strain DSM 44549 / YS-314 / AJ 12310 / JCM 11189 / NBRC 100395)).